The primary structure comprises 618 residues: Sodium/iodide cotransporter (618 aa).

Residues 1-14 (MEGAEAGARATFGA) lie on the Extracellular side of the membrane. A helical membrane pass occupies residues 15–31 (WDYGVFATMLLVSTGIG). At 32–56 (LWVGLARGGQRSADDFFTGGRQLAA) the chain is on the cytoplasmic side. The chain crosses the membrane as a discontinuously helical span at residues 57-80 (VPVGLSLAASFMSAVQVLGVPAEA). Residues Ser-69, Val-71, and Gln-72 each coordinate Na(+). Val-76 is an iodide binding site. Residues 81–84 (ARYG) lie on the Extracellular side of the membrane. A helical transmembrane segment spans residues 85-105 (LKFLWMCAGQLLNSLLTAFLF). Residue Met-90 participates in iodide binding. Over 106-130 (LPIFYRLGLTSTYQYLELRFSRAVR) the chain is Cytoplasmic. The chain crosses the membrane as a helical span at residues 131 to 157 (LCGTLQYLVATMLYTGIVIYAPALILN). Residue Tyr-144 coordinates Na(+). Topologically, residues 158-163 (QVTGLD) are extracellular. Residues 164-181 (IWASLLSTGIICTLYTTV) form a helical membrane-spanning segment. Over 182 to 189 (GGMKAVVW) the chain is Cytoplasmic. The chain crosses the membrane as a helical span at residues 190-208 (TDVFQVVVMLVGFWVILAR). Residues 209-243 (GVILLGGPRNVLSLAQNHSRINLMDFDPDPRSRYT) lie on the Extracellular side of the membrane. A discontinuously helical membrane pass occupies residues 244 to 266 (FWTFIVGGTLVWLSMYGVNQAQV). Residue Trp-255 participates in iodide binding. Met-258 contacts Na(+). Residues 267-278 (QRYVACHTEGKA) lie on the Cytoplasmic side of the membrane. Residues 279–301 (KLALLVNQLGLFLIVASAACCGI) form a helical membrane-spanning segment. Topologically, residues 302–335 (VMFVYYKDCDPLLTGRISAPDQYMPLLVLDIFED) are extracellular. A helical membrane pass occupies residues 336–363 (LPGVPGLFLACAYSGTLSTASTSINAMA). Topologically, residues 364-386 (AVTVEDLIKPRMPGLAPRKLVFI) are cytoplasmic. The helical transmembrane segment at 387–408 (SKGLSFIYGSACLTVAALSSLL) threads the bilayer. Topologically, residues 409–411 (GGG) are extracellular. The helical transmembrane segment at 412-437 (VLQGSFTVMGVISGPLLGAFTLGMLL) threads the bilayer. Leu-413 contributes to the iodide binding site. The Na(+) site is built by Ser-416 and Phe-417. Residue Phe-417 participates in iodide binding. Residues 438–441 (PACN) lie on the Cytoplasmic side of the membrane. Residues 442–465 (TPGVLSGLAAGLAVSLWVAVGATL) traverse the membrane as a helical segment. Residues 466–520 (YPPGEQTMGVLPTSAAGCTNDSVLLGPPGATNASNGIPSSGMDTGRPALADTFYA) lie on the Extracellular side of the membrane. 2 N-linked (GlcNAc...) asparagine glycosylation sites follow: Asn-485 and Asn-497. A helical membrane pass occupies residues 521–545 (ISYLYYGALGTLTTMLCGALISYLT). The Cytoplasmic portion of the chain corresponds to 546–618 (GPTKRSSLGP…YLGHDVETNL (73 aa)). Residue Ser-551 is modified to Phosphoserine; by PKA. Positions 587–618 (EDIPAVTKKPPGLKPGAETHPLYLGHDVETNL) are disordered.

The protein belongs to the sodium:solute symporter (SSF) (TC 2.A.21) family. Monomer.

It localises to the cell membrane. The protein resides in the cytoplasm. The catalysed reaction is iodide(out) + 2 Na(+)(out) = iodide(in) + 2 Na(+)(in). It catalyses the reaction chlorate(out) + 2 Na(+)(out) = chlorate(in) + 2 Na(+)(in). It carries out the reaction thiocyanate(out) + 2 Na(+)(out) = thiocyanate(in) + 2 Na(+)(in). The enzyme catalyses nitrate(out) + 2 Na(+)(out) = nitrate(in) + 2 Na(+)(in). The catalysed reaction is selenocyanate(out) + 2 Na(+)(out) = selenocyanate(in) + 2 Na(+)(in). Perchlorate inhibits iodide transport activity. Oxyanions inhibit iodide transport activity by blocking the binding sites for iodide and one of the sodium ions. Functionally, sodium:iodide symporter that mediates the transport of iodide into the thyroid gland. Can also mediate the transport of chlorate, thiocynate, nitrate and selenocynate. This Rattus norvegicus (Rat) protein is Sodium/iodide cotransporter (Slc5a5).